The chain runs to 187 residues: Orotate phosphoribosyltransferase (187 aa).

Residues Arg98, Lys99, Lys102, His104, and 128–136 (EDVTTTGGS) contribute to the 5-phospho-alpha-D-ribose 1-diphosphate site. Positions 132 and 160 each coordinate orotate.

This sequence belongs to the purine/pyrimidine phosphoribosyltransferase family. PyrE subfamily. As to quaternary structure, homodimer. Mg(2+) serves as cofactor.

The catalysed reaction is orotidine 5'-phosphate + diphosphate = orotate + 5-phospho-alpha-D-ribose 1-diphosphate. It participates in pyrimidine metabolism; UMP biosynthesis via de novo pathway; UMP from orotate: step 1/2. Functionally, catalyzes the transfer of a ribosyl phosphate group from 5-phosphoribose 1-diphosphate to orotate, leading to the formation of orotidine monophosphate (OMP). The protein is Orotate phosphoribosyltransferase of Bradyrhizobium diazoefficiens (strain JCM 10833 / BCRC 13528 / IAM 13628 / NBRC 14792 / USDA 110).